Consider the following 405-residue polypeptide: L-carnitine CoA-transferase (405 aa).

2 residues coordinate CoA: Lys97 and Arg104. The active-site Nucleophile is Asp169.

This sequence belongs to the CoA-transferase III family. CaiB subfamily. Homodimer.

It localises to the cytoplasm. It catalyses the reaction crotonobetainyl-CoA + (R)-carnitine = crotonobetaine + (R)-carnitinyl-CoA. It carries out the reaction 4-(trimethylamino)butanoyl-CoA + (R)-carnitine = (R)-carnitinyl-CoA + 4-(trimethylamino)butanoate. It participates in amine and polyamine metabolism; carnitine metabolism. Its function is as follows. Catalyzes the reversible transfer of the CoA moiety from gamma-butyrobetainyl-CoA to L-carnitine to generate L-carnitinyl-CoA and gamma-butyrobetaine. Is also able to catalyze the reversible transfer of the CoA moiety from gamma-butyrobetainyl-CoA or L-carnitinyl-CoA to crotonobetaine to generate crotonobetainyl-CoA. The polypeptide is L-carnitine CoA-transferase (Salmonella gallinarum (strain 287/91 / NCTC 13346)).